The sequence spans 127 residues: NADPH-dependent 7-cyano-7-deazaguanine reductase (127 aa).

The active-site Thioimide intermediate is Cys40. Catalysis depends on Asp47, which acts as the Proton donor. Substrate-binding positions include 62 to 64 and 81 to 82; these read VEL and HE.

It belongs to the GTP cyclohydrolase I family. QueF type 1 subfamily.

The protein resides in the cytoplasm. The catalysed reaction is 7-aminomethyl-7-carbaguanine + 2 NADP(+) = 7-cyano-7-deazaguanine + 2 NADPH + 3 H(+). It functions in the pathway tRNA modification; tRNA-queuosine biosynthesis. In terms of biological role, catalyzes the NADPH-dependent reduction of 7-cyano-7-deazaguanine (preQ0) to 7-aminomethyl-7-deazaguanine (preQ1). This is NADPH-dependent 7-cyano-7-deazaguanine reductase from Campylobacter lari (strain RM2100 / D67 / ATCC BAA-1060).